Consider the following 309-residue polypeptide: Zinc finger protein-like 1 homolog (309 aa).

The B box-type; degenerate zinc finger occupies 1–43; sequence MGLCKCPKRKVTNLFCYEHRVNVCEFCLVDNHPNCVVQSYLTW. Residues 53 to 101 form an RING-type; atypical zinc finger; it reads CSLCKTTLAEGDTIRLNCLHLLHWKCFDEWAANFPATTAPAGYRCPCCS. Positions 200-221 are disordered; that stretch reads GAESSSDTRPLLQLRDADNEEN. The helical transmembrane segment at 254 to 274 threads the bilayer; the sequence is KIALFVIFLAVLALITIIMVM.

Belongs to the ZFPL1 family.

Its subcellular location is the membrane. This Caenorhabditis elegans protein is Zinc finger protein-like 1 homolog.